The following is a 465-amino-acid chain: tRNA modification GTPase MnmE (465 aa).

3 residues coordinate (6S)-5-formyl-5,6,7,8-tetrahydrofolate: arginine 27, glutamate 91, and arginine 130. A TrmE-type G domain is found at 227–386; it reads GLSTAIIGRP…LEAKIADLFF (160 aa). Asparagine 237 serves as a coordination point for K(+). Residues 237–242, 256–262, and 281–284 contribute to the GTP site; these read NVGKSS, TDIAGTT, and DTAG. Mg(2+) is bound at residue serine 241. The K(+) site is built by threonine 256, isoleucine 258, and threonine 261. Threonine 262 serves as a coordination point for Mg(2+). Lysine 465 contributes to the (6S)-5-formyl-5,6,7,8-tetrahydrofolate binding site.

This sequence belongs to the TRAFAC class TrmE-Era-EngA-EngB-Septin-like GTPase superfamily. TrmE GTPase family. Homodimer. Heterotetramer of two MnmE and two MnmG subunits. It depends on K(+) as a cofactor.

It localises to the cytoplasm. In terms of biological role, exhibits a very high intrinsic GTPase hydrolysis rate. Involved in the addition of a carboxymethylaminomethyl (cmnm) group at the wobble position (U34) of certain tRNAs, forming tRNA-cmnm(5)s(2)U34. This Enterococcus faecalis (strain ATCC 700802 / V583) protein is tRNA modification GTPase MnmE.